The chain runs to 273 residues: Dermonecrotic toxin LapSicTox-alphaIB1ai (273 aa).

The active site involves H5. Residues E25 and D27 each contribute to the Mg(2+) site. H41 acts as the Nucleophile in catalysis. 2 disulfides stabilise this stretch: C45–C51 and C47–C190. Residue D85 coordinates Mg(2+). An N-linked (GlcNAc...) asparagine glycan is attached at N250.

The protein belongs to the arthropod phospholipase D family. Class II subfamily. Mg(2+) serves as cofactor. Expressed by the venom gland.

Its subcellular location is the secreted. It catalyses the reaction an N-(acyl)-sphingosylphosphocholine = an N-(acyl)-sphingosyl-1,3-cyclic phosphate + choline. The enzyme catalyses an N-(acyl)-sphingosylphosphoethanolamine = an N-(acyl)-sphingosyl-1,3-cyclic phosphate + ethanolamine. It carries out the reaction a 1-acyl-sn-glycero-3-phosphocholine = a 1-acyl-sn-glycero-2,3-cyclic phosphate + choline. The catalysed reaction is a 1-acyl-sn-glycero-3-phosphoethanolamine = a 1-acyl-sn-glycero-2,3-cyclic phosphate + ethanolamine. Its function is as follows. Dermonecrotic toxins cleave the phosphodiester linkage between the phosphate and headgroup of certain phospholipids (sphingolipid and lysolipid substrates), forming an alcohol (often choline) and a cyclic phosphate. This toxin acts on sphingomyelin (SM). It may also act on ceramide phosphoethanolamine (CPE), lysophosphatidylcholine (LPC) and lysophosphatidylethanolamine (LPE), but not on lysophosphatidylserine (LPS), and lysophosphatidylglycerol (LPG). It acts by transphosphatidylation, releasing exclusively cyclic phosphate products as second products. Induces dermonecrosis, hemolysis, increased vascular permeability, edema, inflammatory response, and platelet aggregation. The polypeptide is Dermonecrotic toxin LapSicTox-alphaIB1ai (Loxosceles apachea (Apache recluse spider)).